Here is a 249-residue protein sequence, read N- to C-terminus: Methylthioribulose-1-phosphate dehydratase (249 aa).

Zn(2+) contacts are provided by H103 and H105.

The protein belongs to the aldolase class II family. MtnB subfamily. Zn(2+) is required as a cofactor.

It catalyses the reaction 5-(methylsulfanyl)-D-ribulose 1-phosphate = 5-methylsulfanyl-2,3-dioxopentyl phosphate + H2O. Its pathway is amino-acid biosynthesis; L-methionine biosynthesis via salvage pathway; L-methionine from S-methyl-5-thio-alpha-D-ribose 1-phosphate: step 2/6. Catalyzes the dehydration of methylthioribulose-1-phosphate (MTRu-1-P) into 2,3-diketo-5-methylthiopentyl-1-phosphate (DK-MTP-1-P). In Leptospira interrogans serogroup Icterohaemorrhagiae serovar Lai (strain 56601), this protein is Methylthioribulose-1-phosphate dehydratase.